We begin with the raw amino-acid sequence, 36 residues long: Photosystem II reaction center protein M (36 aa).

Residues 5–25 (ILAFIATALFILVPTAFLLII) traverse the membrane as a helical segment.

It belongs to the PsbM family. PSII is composed of 1 copy each of membrane proteins PsbA, PsbB, PsbC, PsbD, PsbE, PsbF, PsbH, PsbI, PsbJ, PsbK, PsbL, PsbM, PsbT, PsbX, PsbY, PsbZ, Psb30/Ycf12, at least 3 peripheral proteins of the oxygen-evolving complex and a large number of cofactors. It forms dimeric complexes.

It localises to the plastid. The protein resides in the chloroplast thylakoid membrane. One of the components of the core complex of photosystem II (PSII). PSII is a light-driven water:plastoquinone oxidoreductase that uses light energy to abstract electrons from H(2)O, generating O(2) and a proton gradient subsequently used for ATP formation. It consists of a core antenna complex that captures photons, and an electron transfer chain that converts photonic excitation into a charge separation. This subunit is found at the monomer-monomer interface. The chain is Photosystem II reaction center protein M from Panax ginseng (Korean ginseng).